We begin with the raw amino-acid sequence, 298 residues long: N-acetylmuramic acid 6-phosphate etherase (298 aa).

Residues 55–218 (ITESLRRGGR…STASMVRLGK (164 aa)) form the SIS domain. Glu-83 (proton donor) is an active-site residue. Glu-114 is a catalytic residue.

This sequence belongs to the GCKR-like family. MurNAc-6-P etherase subfamily. In terms of assembly, homodimer.

The catalysed reaction is N-acetyl-D-muramate 6-phosphate + H2O = N-acetyl-D-glucosamine 6-phosphate + (R)-lactate. Its pathway is amino-sugar metabolism; N-acetylmuramate degradation. Its function is as follows. Specifically catalyzes the cleavage of the D-lactyl ether substituent of MurNAc 6-phosphate, producing GlcNAc 6-phosphate and D-lactate. This chain is N-acetylmuramic acid 6-phosphate etherase, found in Mycolicibacterium smegmatis (strain ATCC 700084 / mc(2)155) (Mycobacterium smegmatis).